Reading from the N-terminus, the 290-residue chain is NAD kinase (290 aa).

The Proton acceptor role is filled by D72. Residues 72 to 73, K77, 145 to 146, D175, 186 to 191, and A210 each bind NAD(+); these read DG, NE, and TAYSLS.

This sequence belongs to the NAD kinase family. A divalent metal cation is required as a cofactor.

It localises to the cytoplasm. The enzyme catalyses NAD(+) + ATP = ADP + NADP(+) + H(+). Involved in the regulation of the intracellular balance of NAD and NADP, and is a key enzyme in the biosynthesis of NADP. Catalyzes specifically the phosphorylation on 2'-hydroxyl of the adenosine moiety of NAD to yield NADP. This Bacteroides fragilis (strain YCH46) protein is NAD kinase.